The chain runs to 430 residues: MLDPNLLRNEPDAVAEKLARRGFKLDVDKLGALEERRKVLQVKTENLQAERNSRSKSIGQAKARGEDIESLRLEVNKLGEELDAAKAELDALQAEIRDIALTIPNLPADEVPVGKDENDNVEVSRWGTPREFDFEVRDHVTLGEMHSGLDFAAAVKLTGSRFVVMKGQIARMHRALSQFMLDLHTEQHGYSENYVPYLVNQDTLYGTGQLPKFAGDLFHTRPLEEEADTSNYALIPTAEVPLTNLVRGEIIDEDDLPIKMTAHTPCFRSEAGSYGRDTRGLIRMHQFDKVEMVQIVRPEDSMAALEEMTGHAEKVLQLLGLPYRKIILCTGDMGFGACKTYDLEVWIPAQNTYREISSCSNVWDFQARRMQARCRSKSDKKTRLVHTLNGSGLAVGRTLVAVMENYQQADGRIEVPEVLRPYMNGLEYIG.

237 to 239 (TAE) is a binding site for L-serine. 268 to 270 (RSE) contributes to the ATP binding site. Glu291 contributes to the L-serine binding site. 355–358 (EISS) is a binding site for ATP. Ser391 serves as a coordination point for L-serine.

This sequence belongs to the class-II aminoacyl-tRNA synthetase family. Type-1 seryl-tRNA synthetase subfamily. In terms of assembly, homodimer. The tRNA molecule binds across the dimer.

Its subcellular location is the cytoplasm. It carries out the reaction tRNA(Ser) + L-serine + ATP = L-seryl-tRNA(Ser) + AMP + diphosphate + H(+). It catalyses the reaction tRNA(Sec) + L-serine + ATP = L-seryl-tRNA(Sec) + AMP + diphosphate + H(+). Its pathway is aminoacyl-tRNA biosynthesis; selenocysteinyl-tRNA(Sec) biosynthesis; L-seryl-tRNA(Sec) from L-serine and tRNA(Sec): step 1/1. In terms of biological role, catalyzes the attachment of serine to tRNA(Ser). Is also able to aminoacylate tRNA(Sec) with serine, to form the misacylated tRNA L-seryl-tRNA(Sec), which will be further converted into selenocysteinyl-tRNA(Sec). The protein is Serine--tRNA ligase of Shigella boydii serotype 18 (strain CDC 3083-94 / BS512).